Consider the following 767-residue polypeptide: ABC transporter B family member 4 (767 aa).

The segment at 81 to 104 (NYSSSSNSGNNNNNNYNNKNNNNN) is disordered. Transmembrane regions (helical) follow at residues 208 to 228 (IWLF…GLQI), 252 to 272 (AIFI…MISV), 324 to 344 (VSLG…LILI), 350 to 370 (LGMM…AGWL), and 429 to 449 (IGIF…LVYW). One can recognise an ABC transmembrane type-1 domain in the interval 211-491 (FGFGIITAFF…LSILFTQIMS (281 aa)). The 237-residue stretch at 524 to 760 (IKFINVDFKY…KGLYYKLVQR (237 aa)) folds into the ABC transporter domain. 559–566 (GSSGGGKS) is a binding site for ATP.

This sequence belongs to the ABC transporter superfamily. ABCB family. Multidrug resistance exporter (TC 3.A.1.201) subfamily.

It is found in the membrane. In Dictyostelium discoideum (Social amoeba), this protein is ABC transporter B family member 4 (abcB4).